The chain runs to 124 residues: Anamorsin homolog (124 aa).

A compositionally biased stretch (polar residues) spans 1–20 (MSSPAPSTSHNAANSTQAFS). Disordered stretches follow at residues 1 to 39 (MSSP…EDRE) and 40 to 124 (AKST…TDDI). C49, C56, C59, and C61 together coordinate [2Fe-2S] cluster. The interval 49-61 (CATRRRACKNCTC) is fe-S binding site A. Residues C86, C89, C97, and C100 each contribute to the [4Fe-4S] cluster site. 2 consecutive short sequence motifs (cx2C motif) follow at residues 86–89 (CGNC) and 97–100 (CAGC). Positions 86–100 (CGNCAKGDAFRCAGC) are fe-S binding site B.

This sequence belongs to the anamorsin family. Monomer. The cofactor is [2Fe-2S] cluster. It depends on [4Fe-4S] cluster as a cofactor.

The protein resides in the cytoplasm. It is found in the mitochondrion intermembrane space. Its function is as follows. Component of the cytosolic iron-sulfur (Fe-S) protein assembly (CIA) machinery. Required for the maturation of extramitochondrial Fe-S proteins. Part of an electron transfer chain functioning in an early step of cytosolic Fe-S biogenesis, facilitating the de novo assembly of a [4Fe-4S] cluster on the cytosolic Fe-S scaffold complex. Electrons are transferred from NADPH via a FAD- and FMN-containing diflavin oxidoreductase. Together with the diflavin oxidoreductase, also required for the assembly of the diferric tyrosyl radical cofactor of ribonucleotide reductase (RNR), probably by providing electrons for reduction during radical cofactor maturation in the catalytic small subunit. In Trypanosoma brucei brucei (strain 927/4 GUTat10.1), this protein is Anamorsin homolog.